Reading from the N-terminus, the 366-residue chain is tRNA pseudouridine synthase B (366 aa).

Residues 1–55 (MTVTTPDALLAPHDVQHAGADESAAQIRKPRDNNDPRNANRGGGNGKPRRDKRDV) are disordered. The Nucleophile role is filled by D92.

This sequence belongs to the pseudouridine synthase TruB family. Type 1 subfamily.

The catalysed reaction is uridine(55) in tRNA = pseudouridine(55) in tRNA. Responsible for synthesis of pseudouridine from uracil-55 in the psi GC loop of transfer RNAs. In Rhodopseudomonas palustris (strain ATCC BAA-98 / CGA009), this protein is tRNA pseudouridine synthase B.